A 57-amino-acid polypeptide reads, in one-letter code: Large ribosomal subunit protein bL32B (57 aa).

Belongs to the bacterial ribosomal protein bL32 family.

This chain is Large ribosomal subunit protein bL32B (rpmF2), found in Listeria innocua serovar 6a (strain ATCC BAA-680 / CLIP 11262).